The primary structure comprises 787 residues: Signal transducer and activator of transcription 5B (787 aa).

Tyr-90 is subject to Phosphotyrosine. Ser-128 carries the phosphoserine modification. The 98-residue stretch at 589 to 686 folds into the SH2 domain; the sequence is WNDGAILGFV…EVYSKYYTPV (98 aa). Tyr-682 is subject to Phosphotyrosine. A Phosphotyrosine; by HCK, JAK and PTK6 modification is found at Tyr-699.

It belongs to the transcription factor STAT family. Upon activation, forms a homodimer or a heterodimer with a related family member. Binds NR3C1. Interacts with NCOA1. Interacts with NMI. Interacts with SOCS7. Interacts (via SH2 domain) with INSR. Interacts with CPEB3; this inhibits STAT5B-mediated transcriptional activation. Post-translationally, tyrosine phosphorylated in response to signaling via activated KIT, resulting in translocation to the nucleus. Tyrosine phosphorylated in response to signaling via activated FLT3; wild-type FLT3 results in much weaker phosphorylation than constitutively activated mutant FLT3. Alternatively, can be phosphorylated by JAK2. Phosphorylation at Tyr-699 by PTK6 or HCK leads to an increase of its transcriptional activity.

It is found in the cytoplasm. It localises to the nucleus. Its function is as follows. Carries out a dual function: signal transduction and activation of transcription. Mediates cellular responses to the cytokine KITLG/SCF and other growth factors. Binds to the GAS element and activates PRL-induced transcription. Positively regulates hematopoietic/erythroid differentiation. The polypeptide is Signal transducer and activator of transcription 5B (STAT5B) (Bos taurus (Bovine)).